The following is a 389-amino-acid chain: Trans-2-enoyl-CoA reductase [NADH] (389 aa).

NAD(+) is bound by residues 47–52, 73–74, 110–111, and 138–139; these read GASTGY, FE, DA, and LA. Residue Tyr-224 participates in substrate binding. Tyr-234 acts as the Proton donor in catalysis. NAD(+)-binding positions include Lys-243 and 272–274; that span reads LVT.

This sequence belongs to the TER reductase family. As to quaternary structure, monomer.

The enzyme catalyses a 2,3-saturated acyl-CoA + NAD(+) = a (2E)-enoyl-CoA + NADH + H(+). Its pathway is lipid metabolism; fatty acid biosynthesis. In terms of biological role, involved in the fatty acid synthesis (FAS II). Catalyzes the reduction of a carbon-carbon double bond in an enoyl moiety that is covalently linked to a coenzyme A (CoA). The protein is Trans-2-enoyl-CoA reductase [NADH] of Clostridium perfringens (strain 13 / Type A).